A 278-amino-acid polypeptide reads, in one-letter code: Probable endonuclease 4 (278 aa).

Residues His-69, His-109, Glu-145, Asp-179, His-182, His-216, Asp-229, His-231, and Glu-261 each coordinate Zn(2+).

Belongs to the AP endonuclease 2 family. Zn(2+) serves as cofactor.

The enzyme catalyses Endonucleolytic cleavage to 5'-phosphooligonucleotide end-products.. In terms of biological role, endonuclease IV plays a role in DNA repair. It cleaves phosphodiester bonds at apurinic or apyrimidinic (AP) sites, generating a 3'-hydroxyl group and a 5'-terminal sugar phosphate. This chain is Probable endonuclease 4, found in Buchnera aphidicola subsp. Baizongia pistaciae (strain Bp).